Reading from the N-terminus, the 491-residue chain is Probable cytosol aminopeptidase (491 aa).

Mn(2+)-binding residues include lysine 263 and aspartate 268. Lysine 275 is an active-site residue. Mn(2+) contacts are provided by aspartate 286, aspartate 345, and glutamate 347. Arginine 349 is an active-site residue.

The protein belongs to the peptidase M17 family. Mn(2+) serves as cofactor.

The protein localises to the cytoplasm. The catalysed reaction is Release of an N-terminal amino acid, Xaa-|-Yaa-, in which Xaa is preferably Leu, but may be other amino acids including Pro although not Arg or Lys, and Yaa may be Pro. Amino acid amides and methyl esters are also readily hydrolyzed, but rates on arylamides are exceedingly low.. It catalyses the reaction Release of an N-terminal amino acid, preferentially leucine, but not glutamic or aspartic acids.. Its function is as follows. Presumably involved in the processing and regular turnover of intracellular proteins. Catalyzes the removal of unsubstituted N-terminal amino acids from various peptides. This chain is Probable cytosol aminopeptidase, found in Haemophilus influenzae (strain PittGG).